We begin with the raw amino-acid sequence, 318 residues long: tRNA pseudouridine synthase B (318 aa).

Residue Asp-54 is the Nucleophile of the active site.

Belongs to the pseudouridine synthase TruB family. Type 1 subfamily.

The catalysed reaction is uridine(55) in tRNA = pseudouridine(55) in tRNA. Functionally, responsible for synthesis of pseudouridine from uracil-55 in the psi GC loop of transfer RNAs. The sequence is that of tRNA pseudouridine synthase B from Ralstonia pickettii (strain 12J).